The following is a 382-amino-acid chain: Proton extrusion protein PxcA (382 aa).

4 consecutive transmembrane segments (helical) span residues T156–V176, A257–F277, I305–L325, and F340–I360.

This sequence belongs to the CemA family.

Its subcellular location is the cell inner membrane. Functionally, required for H(+) efflux immediately after light irradiation to form a rapid H(+) concentration gradient across the thylakoid membranes. Together with PxcL, contributes to transient H(+) uptake following dark to light transition. This Synechococcus sp. (strain CC9311) protein is Proton extrusion protein PxcA.